The chain runs to 568 residues: Sulfite reductase [NADPH] hemoprotein beta-component (568 aa).

The [4Fe-4S] cluster site is built by Cys425, Cys431, Cys470, and Cys474. Residue Cys474 participates in siroheme binding.

The protein belongs to the nitrite and sulfite reductase 4Fe-4S domain family. Alpha(8)-beta(8). The alpha component is a flavoprotein, the beta component is a hemoprotein. Siroheme serves as cofactor. It depends on [4Fe-4S] cluster as a cofactor.

It catalyses the reaction hydrogen sulfide + 3 NADP(+) + 3 H2O = sulfite + 3 NADPH + 4 H(+). It participates in sulfur metabolism; hydrogen sulfide biosynthesis; hydrogen sulfide from sulfite (NADPH route): step 1/1. Functionally, component of the sulfite reductase complex that catalyzes the 6-electron reduction of sulfite to sulfide. This is one of several activities required for the biosynthesis of L-cysteine from sulfate. In Xanthomonas campestris pv. campestris (strain B100), this protein is Sulfite reductase [NADPH] hemoprotein beta-component.